Reading from the N-terminus, the 552-residue chain is Small ribosomal subunit protein bS1 (552 aa).

6 S1 motif domains span residues 31–101, 116–179, 200–268, 285–355, 372–440, and 457–521; these read TIKE…ISQQ, NAII…ISRK, TEPV…LSIK, GYAI…VSLK, GDIV…LSAK, and DSVI…ASVH.

The protein belongs to the bacterial ribosomal protein bS1 family.

Its function is as follows. Binds mRNA; thus facilitating recognition of the initiation point. It is needed to translate mRNA with a short Shine-Dalgarno (SD) purine-rich sequence. The polypeptide is Small ribosomal subunit protein bS1 (rpsA) (Helicobacter pylori (strain J99 / ATCC 700824) (Campylobacter pylori J99)).